The chain runs to 277 residues: MSDQEAPLRNGVEHKIFEVLPFVDDDYGGVIVEMKTPMDTKNFVAALRDSFEQWRLQGKKGVWLNLPLSHVNLVEPAVKEGFRYHHAEPTYLMLVYWIPEAESTIPLNASHRVRVGAVVLNHNKEEKYGSLCGSGIWKIPTGVVDEGEEIFAAAIREVKEETGIDTEFLEILAFCQTHESFFAKSDLFFVCLLRPTSFDIQKQDLEIEAAQWMRFEDSASQPITHKNDLFKDIHHICSMKMEKSYSGFSKKPITTFFDDKLGYLYLNKQEDMEQPIS.

Positions 97-235 (WIPEAESTIP…KNDLFKDIHH (139 aa)) constitute a Nudix hydrolase domain. Residues 142 to 163 (GVVDEGEEIFAAAIREVKEETG) carry the Nudix box motif. 2 residues coordinate Mg(2+): Glu-157 and Glu-161.

Belongs to the Nudix hydrolase family. Mg(2+) serves as cofactor. Mn(2+) is required as a cofactor. In terms of tissue distribution, expressed in roots, stems and, at lower level, leaves.

It carries out the reaction ADP-D-ribose + H2O = D-ribose 5-phosphate + AMP + 2 H(+). It catalyses the reaction NAD(+) + H2O = beta-nicotinamide D-ribonucleotide + AMP + 2 H(+). The catalysed reaction is NADH + H2O = reduced beta-nicotinamide D-ribonucleotide + AMP + 2 H(+). In terms of biological role, may mediate the hydrolysis of some nucleoside diphosphate derivatives. In vitro, uses both ADP-ribose and NADH as substrates; however the relevance of such substrates in vivo is unclear. This is Nudix hydrolase 10 (NUDT10) from Arabidopsis thaliana (Mouse-ear cress).